The primary structure comprises 216 residues: Endoplasmic reticulum vesicle protein 25 (216 aa).

Residues 1 to 21 form the signal peptide; the sequence is MMVSLKSSLFFMLALLTVVHA. The Lumenal portion of the chain corresponds to 22–184; the sequence is LNFDIPAKTN…TNESTNERVK (163 aa). Residues 34-150 form the GOLD domain; that stretch reads PFCLREYVGE…LEPVEADIRR (117 aa). Residues 185–205 traverse the membrane as a helical segment; it reads NFAYLTFISLFVLVIWQILYL. At 206–216 the chain is on the cytoplasmic side; that stretch reads RSFFQRKHLIP.

It belongs to the EMP24/GP25L family.

The protein resides in the endoplasmic reticulum membrane. Its subcellular location is the golgi apparatus membrane. In terms of biological role, constituent of COPII-coated endoplasmic reticulum-derived transport vesicles. Required for efficient transport of a subset of secretory proteins to the Golgi. Facilitates retrograde transport from the Golgi to the endoplasmic reticulum. This chain is Endoplasmic reticulum vesicle protein 25 (erv25), found in Schizosaccharomyces pombe (strain 972 / ATCC 24843) (Fission yeast).